A 407-amino-acid polypeptide reads, in one-letter code: Nuclear hormone receptor family member nhr-86 (407 aa).

The segment at residues 21-96 (KSTCSICRED…VGMNPAGVQQ (76 aa)) is a DNA-binding region (nuclear receptor). 2 NR C4-type zinc fingers span residues 24-44 (CSIC…CRAC) and 60-79 (CRGN…CRSC). Positions 130–405 (AQSALVEDLH…KDFYDLVNGK (276 aa)) constitute an NR LBD domain. The tract at residues 394 to 405 (PPKDFYDLVNGK) is AF-2.

This sequence belongs to the nuclear hormone receptor family. In terms of tissue distribution, expressed in intestinal epithelial cells, excretory gland cells and in several head neurons.

The protein localises to the nucleus. Its function is as follows. Nuclear receptor which acts as a transcription activator. Binds small molecule ligands, such as phenazine 1-carboxamide (PCN), a pathogen-derived metabolite, leading to modulation of innate immune responses against virulent pathogens. On exposure to exogenous PCN, P.aeruginosa and other xenobiotic immunostimulant such as R24, activates immune response genes, including irg-4, irg-5, mul-1, drd-50, cyp-35C1 and ugt-30, probably via direct interaction with their promoters, and independent of the p38 MAPK pmk-1 pathway. Exhibits higher affinity to R24 than PCN and thus induces stronger immune response. Binds its own promoter thereby autoregulating its expression in the head hypodermis and the pharynx. Possibly plays a role in lipid storage or catabolism. The polypeptide is Nuclear hormone receptor family member nhr-86 (nhr-86) (Caenorhabditis elegans).